Here is a 79-residue protein sequence, read N- to C-terminus: Ponericin-W-like 32.1 (79 aa).

Positions 1–23 are cleaved as a signal peptide; the sequence is MKCKKQLLVIFFAYFLVVNESEA. Residues 49-79 constitute a propeptide that is removed on maturation; the sequence is RALMKRDLEDIMDPYQKNLKLDRYLRRLAMD.

Belongs to the non-disulfide-bridged peptide (NDBP) superfamily. Medium-length antimicrobial peptide (group 3) family. Ponericin-W subfamily. In terms of tissue distribution, expressed by the venom gland.

The protein resides in the secreted. It localises to the target cell membrane. Functionally, antimicrobial peptide with potent activity against a range of Gram-positive and Gram-negative bacteria. Has high hemolytic activity against erythrocytes. May act by disrupting the integrity of the bacterial cell membrane. The protein is Ponericin-W-like 32.1 of Lychas mucronatus (Chinese swimming scorpion).